We begin with the raw amino-acid sequence, 313 residues long: Protein FixB (313 aa).

255–283 (LYLAVGISGQIQHMVGANASQTIFAINKD) lines the FAD pocket.

This sequence belongs to the ETF alpha-subunit/FixB family. In terms of assembly, heterodimer of FixA and FixB.

It participates in amine and polyamine metabolism; carnitine metabolism. In terms of biological role, required for anaerobic carnitine reduction. May bring reductant to CaiA. The polypeptide is Protein FixB (Escherichia coli O81 (strain ED1a)).